A 223-amino-acid chain; its full sequence is ATP-dependent dethiobiotin synthetase BioD (223 aa).

Residue 12–17 (EIGKTH) participates in ATP binding. Thr-16 contacts Mg(2+). Lys-37 is a catalytic residue. Ser-41 provides a ligand contact to substrate. Residues Asp-52 and 118 to 121 (EGVG) contribute to the ATP site. Positions 52 and 118 each coordinate Mg(2+).

Belongs to the dethiobiotin synthetase family. As to quaternary structure, homodimer. Mg(2+) serves as cofactor.

It localises to the cytoplasm. It carries out the reaction (7R,8S)-7,8-diammoniononanoate + CO2 + ATP = (4R,5S)-dethiobiotin + ADP + phosphate + 3 H(+). Its pathway is cofactor biosynthesis; biotin biosynthesis; biotin from 7,8-diaminononanoate: step 1/2. Functionally, catalyzes a mechanistically unusual reaction, the ATP-dependent insertion of CO2 between the N7 and N8 nitrogen atoms of 7,8-diaminopelargonic acid (DAPA, also called 7,8-diammoniononanoate) to form a ureido ring. This Acidiphilium cryptum (strain JF-5) protein is ATP-dependent dethiobiotin synthetase BioD.